The chain runs to 312 residues: MRIAFLGTPAFAVAALDALDWAGHALVTVVAQPDRPAGRGQALREPATKAWARARGVPVLQPEKVRDGTLAAALRALAPDALVVAAYGRILGKDLLTLAPHGAINVHGSLLPRWRGAAPIQWAVAEGERETGVTIMQMDEGLDTGDVLLQRALEIREDDTSETLAPRLAALGGEALVEALRLLEAGAIVPVRQDAAQATLARILEKEDGRIAWTSPARRVSDRLRGFTPWPGAFTTLEGRTLKVLEARPGADAEAPAGEPGEAEVVPGRGLAVACGGGTALLVTRVQLEGRPAQSALDLANGLRRKRFRLGT.

Residue 109 to 112 participates in (6S)-5,6,7,8-tetrahydrofolate binding; the sequence is SLLP.

It belongs to the Fmt family.

It carries out the reaction L-methionyl-tRNA(fMet) + (6R)-10-formyltetrahydrofolate = N-formyl-L-methionyl-tRNA(fMet) + (6S)-5,6,7,8-tetrahydrofolate + H(+). Attaches a formyl group to the free amino group of methionyl-tRNA(fMet). The formyl group appears to play a dual role in the initiator identity of N-formylmethionyl-tRNA by promoting its recognition by IF2 and preventing the misappropriation of this tRNA by the elongation apparatus. The sequence is that of Methionyl-tRNA formyltransferase from Anaeromyxobacter sp. (strain K).